The chain runs to 263 residues: uncharacterized protein (263 aa).

This sequence belongs to the A.longa ORF167/ORF288 family.

The protein resides in the plastid. This is an uncharacterized protein from Euglena longa (Euglenophycean alga).